Reading from the N-terminus, the 364-residue chain is Aminomethyltransferase (364 aa).

It belongs to the GcvT family. In terms of assembly, the glycine cleavage system is composed of four proteins: P, T, L and H.

The enzyme catalyses N(6)-[(R)-S(8)-aminomethyldihydrolipoyl]-L-lysyl-[protein] + (6S)-5,6,7,8-tetrahydrofolate = N(6)-[(R)-dihydrolipoyl]-L-lysyl-[protein] + (6R)-5,10-methylene-5,6,7,8-tetrahydrofolate + NH4(+). In terms of biological role, the glycine cleavage system catalyzes the degradation of glycine. The sequence is that of Aminomethyltransferase from Salmonella paratyphi B (strain ATCC BAA-1250 / SPB7).